We begin with the raw amino-acid sequence, 180 residues long: Putative protein 33K (180 aa).

Positions 31–108 (LEEAYKQLEK…AKAPRNYGTP (78 aa)) are disordered. A compositionally biased stretch (basic and acidic residues) spans 33–43 (EAYKQLEKELG). A compositionally biased stretch (acidic residues) spans 60 to 78 (PLSEGELEEISEEEEEEGE).

The chain is Putative protein 33K from Pantherophis guttatus (Corn snake).